Consider the following 178-residue polypeptide: uncharacterized protein (178 aa).

An N-terminal signal peptide occupies residues 1–19 (MKKLLIVTMLFTLALSAQA).

It belongs to the opacity porin family.

This is an uncharacterized protein from Haemophilus influenzae (strain ATCC 51907 / DSM 11121 / KW20 / Rd).